The chain runs to 370 residues: MPSAKPLFCLATLAGAALAAPAPSRATDFNKRSTCTFTDAATASESKTSCSDIVLKDITVPAGETLNLKDLNDGTTVTFEGTTTWEYEEWDGPLLRISGKDITVTQSSDAVLNGNGAKWWDGEGTNGGKTKPKFFYAHDLDDSKISGLYIKNTPVQAISVESDNLVIEDVTIDNSDGDSEGGHNTDGFDISESTYITITGATVKNQDDCVAINSGENIYFSGGTCSGGHGLSIGSVGGRDDNTVKNVTFIDSTVSDSENGVRIKTVYDATGTVEDITYSNIQLSGISDYGIVIEQDYENGDPTGTPSNGVTISDVTLEDITGSVDSDAVEIYILCGDGSCTDWTMSGIDITGGETSSDCENVPSGASCSQ.

The first 19 residues, 1–19 (MPSAKPLFCLATLAGAALA), serve as a signal peptide directing secretion. A propeptide spanning residues 20–32 (APAPSRATDFNKR) is cleaved from the precursor. Cysteine 35 and cysteine 50 form a disulfide bridge. 6 PbH1 repeats span residues 162-192 (SDNLVIEDVTIDNSDGDSEGGHNTDGFDISE), 193-214 (STYITITGATVKNQDDCVAINS), 215-235 (GENIYFSGGTCSGGHGLSIGS), 244-265 (VKNVTFIDSTVSDSENGVRIKT), 273-295 (VEDITYSNIQLSGISDYGIVIEQ), and 307-352 (SNGV…DITG). Aspartate 207 acts as the Proton donor in catalysis. Residues cysteine 209 and cysteine 225 are joined by a disulfide bond. Histidine 229 is an active-site residue. A glycan (N-linked (GlcNAc...) asparagine) is linked at asparagine 246. 2 disulfides stabilise this stretch: cysteine 335-cysteine 340 and cysteine 359-cysteine 368.

The protein belongs to the glycosyl hydrolase 28 family.

The protein localises to the secreted. It carries out the reaction (1,4-alpha-D-galacturonosyl)n+m + H2O = (1,4-alpha-D-galacturonosyl)n + (1,4-alpha-D-galacturonosyl)m.. Its function is as follows. Involved in maceration and soft-rotting of plant tissue. Hydrolyzes the 1,4-alpha glycosidic bonds of de-esterified pectate in the smooth region of the plant cell wall. This chain is Probable endopolygalacturonase A (pgaA), found in Aspergillus kawachii (strain NBRC 4308) (White koji mold).